Reading from the N-terminus, the 489-residue chain is Serotonin-gated chloride channel mod-1 (489 aa).

The first 20 residues, 1-20, serve as a signal peptide directing secretion; that stretch reads MKFIPEITLLLLLFVHSTQA. Over 21 to 240 the chain is Extracellular; that stretch reads KGKRRKCPEG…VTFTFKRRYG (220 aa). N-linked (GlcNAc...) asparagine glycosylation is found at Asn44, Asn103, and Asn144. Tyr180 and Trp226 together coordinate serotonin. 3 helical membrane-spanning segments follow: residues 241-261, 274-294, and 304-324; these read FYII…WVSF, VGIS…KNLP, and VWML…AFVC. Topologically, residues 325-458 are cytoplasmic; the sequence is YISRCQNSVR…ARFHPEAVDK (134 aa). Residues 365-398 are disordered; that stretch reads GSVISHYHPTSNGNGNNNRHDTPQVTGRGSLHRN. The segment covering 372–391 has biased composition (polar residues); sequence HPTSNGNGNNNRHDTPQVTG. The helical transmembrane segment at 459-479 threads the bilayer; that stretch reads FSIVAFPLAFTMFNLVYWWHY.

It belongs to the ligand-gated ion channel (TC 1.A.9) family. In terms of tissue distribution, expressed in a subset of muscles, and head and tail neurons, including RME and GABAergic ventral nerve cord neurons. Expressed in AIY, RME, RID, RIF, ASI, DD1-6, and PVN neurons.

It localises to the membrane. It is found in the cell membrane. In terms of biological role, functions as a 5-hydroxytryptamine (serotonin) receptor. This receptor is a ligand-gated anion-specific ion channel, selective for chloride ions. Relays a long-range endocrine signal from the body cavity neurons to modulate distal adipose triglyceride lipase atgl-1 function, via the nuclear receptor nhr-76. Together with the G-protein coupled serotonin receptor ser-1 involved in male mating behavior. May mediate an inhibitory effect of serotonin on egg laying. Involved in regulating locomotory behavior, perhaps by modulating interneuronal signaling, acting in concert with G-protein coupled serotonin receptor ser-4. In the presence of food, plays a role in initiating and extending dwelling behavior, perhaps acting in AIY, RIF and ASI neurons, in opposition to neuropeptide PDF-mediated signaling. Plays a role in aversive learning upon exposure to pathogens such as Gram-negative bacterium P.aeruginosa strain PA14; perhaps acting in interneurons in response to serotonin released by the serotonergic ADF neurons. This is Serotonin-gated chloride channel mod-1 from Caenorhabditis elegans.